Consider the following 262-residue polypeptide: Large ribosomal subunit protein bL9m (262 aa).

A mitochondrion-targeting transit peptide spans 1-49 (MAASMAPRCSSLLWAGAAWLRQRGIGELLQPRIERSTPGRDFSLSHYQS).

This sequence belongs to the bacterial ribosomal protein bL9 family. Component of the mitochondrial ribosome large subunit (39S) which comprises a 16S rRNA and about 50 distinct proteins.

Its subcellular location is the mitochondrion. The polypeptide is Large ribosomal subunit protein bL9m (Mrpl9) (Rattus norvegicus (Rat)).